We begin with the raw amino-acid sequence, 211 residues long: Large ribosomal subunit protein uL3 (211 aa).

The protein belongs to the universal ribosomal protein uL3 family. In terms of assembly, part of the 50S ribosomal subunit. Forms a cluster with proteins L14 and L19.

Its function is as follows. One of the primary rRNA binding proteins, it binds directly near the 3'-end of the 23S rRNA, where it nucleates assembly of the 50S subunit. The protein is Large ribosomal subunit protein uL3 of Trichlorobacter lovleyi (strain ATCC BAA-1151 / DSM 17278 / SZ) (Geobacter lovleyi).